A 358-amino-acid chain; its full sequence is Leukotriene B4 receptor 2 (358 aa).

At 1–24 (MSVCYRPPGNETLLSWKGSRATGT) the chain is on the extracellular side. The N-linked (GlcNAc...) asparagine glycan is linked to N10. The helical transmembrane segment at 25–45 (AFLLLAALLGLPGNGFVVWSL) threads the bilayer. Over 46-60 (AGWRPTAGRPLAATL) the chain is Cytoplasmic. A helical transmembrane segment spans residues 61–81 (VLHLALADGAVLLLTPLFVAF). Topologically, residues 82-96 (LSRQAWPLGQVGCKA) are extracellular. The helical transmembrane segment at 97–117 (VYYVCALSMYASVLLTGLLSL) threads the bilayer. Residues 118 to 140 (QRCLAVTRPFLAPRLRSPALARR) are Cytoplasmic-facing. Residues 141 to 161 (LLLGVWLAALVLAVPAAVYRH) form a helical membrane-spanning segment. Over 162-185 (LWGDRVCQLCHPSAVHAAAHLSLE) the chain is Extracellular. The helical transmembrane segment at 186–206 (TLTAFVLPFGTVLGCYGVTLA) threads the bilayer. The Cytoplasmic segment spans residues 207-225 (RLRGARWGSGRQGTRVGRL). A helical membrane pass occupies residues 226 to 246 (VSAIVLAFGLLWAPYHAVNLL). Residues 247 to 275 (QAVAALAPPEGPLARLGGAGQAARAGTTA) lie on the Extracellular side of the membrane. The chain crosses the membrane as a helical span at residues 276 to 296 (LAFFSSSVNPVLYVFTAGDLL). At 297–358 (PRAGPRFLTR…GRMEKDSQEW (62 aa)) the chain is on the cytoplasmic side. Residues 315–358 (RVGSRSREGTMELRTTPRLKVVGQGRGYGDPGGGGRMEKDSQEW) are disordered. Gly residues predominate over residues 338–349 (QGRGYGDPGGGG).

This sequence belongs to the G-protein coupled receptor 1 family.

It localises to the cell membrane. Its function is as follows. Low-affinity receptor for leukotrienes including leukotriene B4. Mediates chemotaxis of granulocytes and macrophages. The response is mediated via G-proteins that activate a phosphatidylinositol-calcium second messenger system. This chain is Leukotriene B4 receptor 2 (Ltb4r2), found in Rattus norvegicus (Rat).